The sequence spans 239 residues: Transmembrane emp24 domain-containing protein 6 (239 aa).

An N-terminal signal peptide occupies residues 1 to 21; the sequence is MFPLLLVAELVVLSLVTSVKS. Residues 22-200 lie on the Lumenal side of the membrane; it reads QETDPLHGSK…FFLLQSNYTY (179 aa). Positions 53-138 constitute a GOLD domain; the sequence is IECFWQFADQ…SIQVYLNFGV (86 aa). 2 N-linked (GlcNAc...) asparagine glycosylation sites follow: Asn-156 and Asn-197. Residues 201–223 traverse the membrane as a helical segment; the sequence is VNWWSTAQSLAIVLSGALQLYFL. Residues 224–239 lie on the Cytoplasmic side of the membrane; the sequence is KRLFTASTTDTKKPRC.

This sequence belongs to the EMP24/GP25L family.

The protein resides in the endoplasmic reticulum membrane. In Mus musculus (Mouse), this protein is Transmembrane emp24 domain-containing protein 6 (Tmed6).